A 148-amino-acid chain; its full sequence is UPF0756 membrane protein YeaL (148 aa).

4 helical membrane passes run 14 to 34, 51 to 71, 86 to 106, and 121 to 141; these read ALGFISHNTTVAVSILVLIIV, LSIGIIILTIGVMAPIASGTL, LVAIAVGVIVYWLGGRGVTLM, and VLGVALFRGVPVGPLIAAGLV.

This sequence belongs to the UPF0756 family.

It localises to the cell membrane. This chain is UPF0756 membrane protein YeaL, found in Shigella dysenteriae serotype 1 (strain Sd197).